The chain runs to 548 residues: Chaperonin GroEL (548 aa).

Residues 30–33 (TLGP), Lys51, 87–91 (DGTTT), Gly415, 479–481 (NAA), and Asp495 contribute to the ATP site.

The protein belongs to the chaperonin (HSP60) family. As to quaternary structure, forms a cylinder of 14 subunits composed of two heptameric rings stacked back-to-back. Interacts with the co-chaperonin GroES.

It is found in the cytoplasm. It catalyses the reaction ATP + H2O + a folded polypeptide = ADP + phosphate + an unfolded polypeptide.. In terms of biological role, together with its co-chaperonin GroES, plays an essential role in assisting protein folding. The GroEL-GroES system forms a nano-cage that allows encapsulation of the non-native substrate proteins and provides a physical environment optimized to promote and accelerate protein folding. This chain is Chaperonin GroEL, found in Pseudomonas fluorescens (strain Pf0-1).